Reading from the N-terminus, the 574-residue chain is M-phase inducer phosphatase 2 (574 aa).

Disordered stretches follow at residues 31 to 51 (GFGF…SSSP) and 90 to 110 (RRTS…AGLC). Serine 42 bears the Phosphoserine mark. The segment covering 90 to 105 (RRTSECSLSSESSESS) has biased composition (low complexity). At serine 166 the chain carries Phosphoserine; by MELK. Serine 246 carries the post-translational modification Phosphoserine. Serine 319 bears the Phosphoserine; by MAPKAPK2 and MELK mark. Serine 319 carries the post-translational modification Phosphoserine; by MELK and MAPK14. Residues 339–359 (DVPVLSKRRKSGTPLEEQQLE) are disordered. Position 349 is a phosphoserine; by AURKA (serine 349). Serine 370 is modified (phosphoserine; by BRSK1 and MAPK14). Residues 425–532 (IVEKFVIVDC…FFPQHPNFCE (108 aa)) form the Rhodanese domain. Residue cysteine 481 is part of the active site. A Phosphoserine modification is found at serine 557.

The protein belongs to the MPI phosphatase family. In terms of assembly, interacts with MAPK14 and 14-3-3 proteins. Phosphorylated by BRSK1 in vitro. Phosphorylated by CHEK1, which inhibits the activity of this protein. Phosphorylation at Ser-349 by AURKA might locally participate in the control of the onset of mitosis. Phosphorylation by MELK at Ser-166 promotes localization to the centrosome and the spindle poles during mitosis. Phosphorylation at Ser-319 and Ser-370 by MAPK14 is required for binding to 14-3-3 proteins.

It is found in the cytoplasm. The protein localises to the cytoskeleton. Its subcellular location is the microtubule organizing center. The protein resides in the centrosome. It localises to the spindle pole. The enzyme catalyses O-phospho-L-tyrosyl-[protein] + H2O = L-tyrosyl-[protein] + phosphate. Stimulated by B-type cyclins. Its function is as follows. Tyrosine protein phosphatase which functions as a dosage-dependent inducer of mitotic progression. Directly dephosphorylates CDK1 and stimulates its kinase activity. Required for G2/M phases of the cell cycle progression and abscission during cytokinesis in a ECT2-dependent manner. The three isoforms seem to have a different level of activity. The chain is M-phase inducer phosphatase 2 (Cdc25b) from Rattus norvegicus (Rat).